A 225-amino-acid polypeptide reads, in one-letter code: Small ribosomal subunit protein uS7 (225 aa).

N-acetylserine is present on serine 2. Position 27 is a phosphothreonine (threonine 27). Glycyl lysine isopeptide (Lys-Gly) (interchain with G-Cter in ubiquitin) cross-links involve residues lysine 45 and lysine 203.

This sequence belongs to the universal ribosomal protein uS7 family. Component of the small ribosomal subunit (SSU). Mature yeast ribosomes consist of a small (40S) and a large (60S) subunit. The 40S small subunit contains 1 molecule of ribosomal RNA (18S rRNA) and 33 different proteins (encoded by 57 genes). The large 60S subunit contains 3 rRNA molecules (25S, 5.8S and 5S rRNA) and 46 different proteins (encoded by 81 genes). In terms of processing, N-terminally acetylated by acetyltransferase NatA.

The protein localises to the cytoplasm. In terms of biological role, component of the ribosome, a large ribonucleoprotein complex responsible for the synthesis of proteins in the cell. The small ribosomal subunit (SSU) binds messenger RNAs (mRNAs) and translates the encoded message by selecting cognate aminoacyl-transfer RNA (tRNA) molecules. The large subunit (LSU) contains the ribosomal catalytic site termed the peptidyl transferase center (PTC), which catalyzes the formation of peptide bonds, thereby polymerizing the amino acids delivered by tRNAs into a polypeptide chain. The nascent polypeptides leave the ribosome through a tunnel in the LSU and interact with protein factors that function in enzymatic processing, targeting, and the membrane insertion of nascent chains at the exit of the ribosomal tunnel. This is Small ribosomal subunit protein uS7 from Saccharomyces cerevisiae (strain ATCC 204508 / S288c) (Baker's yeast).